The primary structure comprises 1010 residues: Sodium/potassium-transporting ATPase subunit alpha-3 (1010 aa).

The tract at residues 1–21 (MGDKDDRFPKKKKGGTKDMDA) is disordered. Residues 1–74 (MGDKDDRFPK…NALTPPPTTP (74 aa)) lie on the Cytoplasmic side of the membrane. Positions 69–71 (PPP) are interaction with phosphoinositide-3 kinase. A helical membrane pass occupies residues 75-95 (EWVKFCRQLFGGFSILLWTGA). At 96 to 118 (ILCFLAYAIQAATEDEPAGDNLY) the chain is on the extracellular side. The chain crosses the membrane as a helical span at residues 119-139 (LGIVLTAVVVITGCFSYFQEA). Topologically, residues 140–275 (KSSKIMESFK…TGKTPIAVEI (136 aa)) are cytoplasmic. Residues 201-216 (DNSSLTGESEPQSRSP) are compositionally biased toward polar residues. Residues 201–221 (DNSSLTGESEPQSRSPDCTHD) form a disordered region. Residues 276–295 (EHFIHIITGVAVFLGVTFFI) form a helical membrane-spanning segment. At 296 to 307 (LAIILGYTWLKA) the chain is on the extracellular side. The chain crosses the membrane as a helical span at residues 308–325 (VIFLIGIIVANVPEGLLA). Residues 326-759 (TVTVCLTLTA…EEGRLIFDNL (434 aa)) lie on the Cytoplasmic side of the membrane. Aspartate 363 functions as the 4-aspartylphosphate intermediate in the catalytic mechanism. Residues aspartate 704 and aspartate 708 each coordinate Mg(2+). A helical transmembrane segment spans residues 760–779 (KKSIAYTLTSNIPEITPFLF). Topologically, residues 780–789 (FIIVNIPLAL) are extracellular. The helical transmembrane segment at 790 to 810 (GTITILCIDLGTDMGSAISLA) threads the bilayer. Over 811–830 (YETAESDIMKRQPRNPCRDK) the chain is Cytoplasmic. The helical transmembrane segment at 831–853 (LVNERLISIAYGQIGMIQALGGF) threads the bilayer. Residues 854-905 (FSYFVILAENGFLPSQLVGIRLNWDDRSLNDLEDSYGQQWTYEQRKIVEFTC) lie on the Extracellular side of the membrane. The helical transmembrane segment at 906-925 (HTAFFVSIVVVQWADLIICK) threads the bilayer. Over 926 to 938 (TRRNSVFQQGMKN) the chain is Cytoplasmic. Serine 930 is subject to Phosphoserine; by PKA. A helical transmembrane segment spans residues 939–957 (KILIFGLFEETALAAFLSY). The Extracellular portion of the chain corresponds to 958–972 (CPGMDVALRMYPLKP). The chain crosses the membrane as a helical span at residues 973-993 (TWWFWAFPYSFLIFVYDEARK). Topologically, residues 994–1010 (LILCRNPGGWVEKETYY) are cytoplasmic.

Belongs to the cation transport ATPase (P-type) (TC 3.A.3) family. Type IIC subfamily. The sodium/potassium-transporting ATPase is composed of a catalytic alpha subunit, an auxiliary non-catalytic beta subunit and an additional regulatory subunit.

It is found in the cell membrane. The catalysed reaction is K(+)(out) + Na(+)(in) + ATP + H2O = K(+)(in) + Na(+)(out) + ADP + phosphate + H(+). Functionally, this is the catalytic component of the active enzyme, which catalyzes the hydrolysis of ATP coupled with the exchange of sodium and potassium ions across the plasma membrane. This action creates the electrochemical gradient of sodium and potassium ions, providing the energy for active transport of various nutrients. This Oreochromis mossambicus (Mozambique tilapia) protein is Sodium/potassium-transporting ATPase subunit alpha-3 (atp1a3).